We begin with the raw amino-acid sequence, 445 residues long: Maltoporin (445 aa).

Residues 1 to 25 (MKMKAKWLPIAAGVTAALASQAAFA) form the signal peptide.

It belongs to the porin LamB (TC 1.B.3) family. As to quaternary structure, homotrimer formed of three 18-stranded antiparallel beta-barrels, containing three independent channels.

The protein localises to the cell outer membrane. The catalysed reaction is beta-maltose(in) = beta-maltose(out). Functionally, involved in the transport of maltose and maltodextrins. The protein is Maltoporin of Aeromonas salmonicida.